Here is a 177-residue protein sequence, read N- to C-terminus: Large ribosomal subunit protein bL9 (177 aa).

This sequence belongs to the bacterial ribosomal protein bL9 family.

Functionally, binds to the 23S rRNA. This Rhodopirellula baltica (strain DSM 10527 / NCIMB 13988 / SH1) protein is Large ribosomal subunit protein bL9.